Reading from the N-terminus, the 249-residue chain is Putative S-adenosyl-L-methionine-dependent methyltransferase Mkms_0592 (249 aa).

Residues Asp111 and 141-142 contribute to the S-adenosyl-L-methionine site; that span reads DL.

The protein belongs to the UPF0677 family.

Functionally, exhibits S-adenosyl-L-methionine-dependent methyltransferase activity. The sequence is that of Putative S-adenosyl-L-methionine-dependent methyltransferase Mkms_0592 from Mycobacterium sp. (strain KMS).